The chain runs to 424 residues: Serine--tRNA ligase (424 aa).

229 to 231 (TAE) is a binding site for L-serine. Residues 259–261 (RKE) and Val-275 contribute to the ATP site. Residue Glu-282 participates in L-serine binding. 349–352 (EVTS) is a binding site for ATP. Position 383 (Thr-383) interacts with L-serine.

It belongs to the class-II aminoacyl-tRNA synthetase family. Type-1 seryl-tRNA synthetase subfamily. In terms of assembly, homodimer. The tRNA molecule binds across the dimer.

The protein localises to the cytoplasm. It carries out the reaction tRNA(Ser) + L-serine + ATP = L-seryl-tRNA(Ser) + AMP + diphosphate + H(+). It catalyses the reaction tRNA(Sec) + L-serine + ATP = L-seryl-tRNA(Sec) + AMP + diphosphate + H(+). It functions in the pathway aminoacyl-tRNA biosynthesis; selenocysteinyl-tRNA(Sec) biosynthesis; L-seryl-tRNA(Sec) from L-serine and tRNA(Sec): step 1/1. Functionally, catalyzes the attachment of serine to tRNA(Ser). Is also able to aminoacylate tRNA(Sec) with serine, to form the misacylated tRNA L-seryl-tRNA(Sec), which will be further converted into selenocysteinyl-tRNA(Sec). The sequence is that of Serine--tRNA ligase from Borrelia recurrentis (strain A1).